The chain runs to 245 residues: 3-deoxy-manno-octulosonate cytidylyltransferase (245 aa).

The protein belongs to the KdsB family.

The protein localises to the cytoplasm. It catalyses the reaction 3-deoxy-alpha-D-manno-oct-2-ulosonate + CTP = CMP-3-deoxy-beta-D-manno-octulosonate + diphosphate. It functions in the pathway nucleotide-sugar biosynthesis; CMP-3-deoxy-D-manno-octulosonate biosynthesis; CMP-3-deoxy-D-manno-octulosonate from 3-deoxy-D-manno-octulosonate and CTP: step 1/1. Its pathway is bacterial outer membrane biogenesis; lipopolysaccharide biosynthesis. Activates KDO (a required 8-carbon sugar) for incorporation into bacterial lipopolysaccharide in Gram-negative bacteria. The protein is 3-deoxy-manno-octulosonate cytidylyltransferase of Rhodopseudomonas palustris (strain BisB5).